The following is a 350-amino-acid chain: Small ribosomal subunit biogenesis GTPase RsgA (350 aa).

Positions 1 to 17 (MSKNKLSKGQQRRVNAN) are enriched in polar residues. Residues 1–24 (MSKNKLSKGQQRRVNANHQRRLKT) are disordered. One can recognise a CP-type G domain in the interval 104–273 (TSVLTRPDFY…VIDSPGVREF (170 aa)). GTP-binding positions include 160 to 163 (NKID) and 214 to 222 (GQSGVGKSS). The Zn(2+) site is built by Cys297, Cys302, His304, and Cys310.

This sequence belongs to the TRAFAC class YlqF/YawG GTPase family. RsgA subfamily. In terms of assembly, monomer. Associates with 30S ribosomal subunit, binds 16S rRNA. Zn(2+) serves as cofactor.

Its subcellular location is the cytoplasm. Functionally, one of several proteins that assist in the late maturation steps of the functional core of the 30S ribosomal subunit. Helps release RbfA from mature subunits. May play a role in the assembly of ribosomal proteins into the subunit. Circularly permuted GTPase that catalyzes slow GTP hydrolysis, GTPase activity is stimulated by the 30S ribosomal subunit. This chain is Small ribosomal subunit biogenesis GTPase RsgA, found in Salmonella schwarzengrund (strain CVM19633).